Here is a 383-residue protein sequence, read N- to C-terminus: 8-amino-7-oxononanoate synthase (383 aa).

Substrate is bound at residue R23. 110–111 (GF) contacts pyridoxal 5'-phosphate. A substrate-binding site is contributed by H135. 3 residues coordinate pyridoxal 5'-phosphate: S181, H209, and T235. K238 is modified (N6-(pyridoxal phosphate)lysine). T351 lines the substrate pocket.

Belongs to the class-II pyridoxal-phosphate-dependent aminotransferase family. BioF subfamily. Homodimer. It depends on pyridoxal 5'-phosphate as a cofactor.

It catalyses the reaction 6-carboxyhexanoyl-[ACP] + L-alanine + H(+) = (8S)-8-amino-7-oxononanoate + holo-[ACP] + CO2. It functions in the pathway cofactor biosynthesis; biotin biosynthesis. Catalyzes the decarboxylative condensation of pimeloyl-[acyl-carrier protein] and L-alanine to produce 8-amino-7-oxononanoate (AON), [acyl-carrier protein], and carbon dioxide. The protein is 8-amino-7-oxononanoate synthase of Aliivibrio fischeri (strain ATCC 700601 / ES114) (Vibrio fischeri).